The sequence spans 119 residues: Phosphoribosyl-AMP cyclohydrolase (119 aa).

Asp-77 lines the Mg(2+) pocket. Cys-78 is a Zn(2+) binding site. Residues Asp-79 and Asp-81 each coordinate Mg(2+). Cys-94 and Cys-101 together coordinate Zn(2+).

This sequence belongs to the PRA-CH family. Homodimer. Mg(2+) is required as a cofactor. Zn(2+) serves as cofactor.

It localises to the cytoplasm. The catalysed reaction is 1-(5-phospho-beta-D-ribosyl)-5'-AMP + H2O = 1-(5-phospho-beta-D-ribosyl)-5-[(5-phospho-beta-D-ribosylamino)methylideneamino]imidazole-4-carboxamide. It functions in the pathway amino-acid biosynthesis; L-histidine biosynthesis; L-histidine from 5-phospho-alpha-D-ribose 1-diphosphate: step 3/9. Its function is as follows. Catalyzes the hydrolysis of the adenine ring of phosphoribosyl-AMP. This chain is Phosphoribosyl-AMP cyclohydrolase, found in Dinoroseobacter shibae (strain DSM 16493 / NCIMB 14021 / DFL 12).